The chain runs to 98 residues: NADH-ubiquinone oxidoreductase chain 4L (98 aa).

3 helical membrane-spanning segments follow: residues 1-21 (MSMVYINIFLAFIMSLMGLLM), 29-49 (SLLCLEGMMLSLFIMMAVAIL), and 61-81 (IILLVFAACEAALGLSLLVMV).

It belongs to the complex I subunit 4L family. In terms of assembly, core subunit of respiratory chain NADH dehydrogenase (Complex I) which is composed of 45 different subunits.

The protein localises to the mitochondrion inner membrane. The catalysed reaction is a ubiquinone + NADH + 5 H(+)(in) = a ubiquinol + NAD(+) + 4 H(+)(out). Core subunit of the mitochondrial membrane respiratory chain NADH dehydrogenase (Complex I) which catalyzes electron transfer from NADH through the respiratory chain, using ubiquinone as an electron acceptor. Part of the enzyme membrane arm which is embedded in the lipid bilayer and involved in proton translocation. This chain is NADH-ubiquinone oxidoreductase chain 4L (MT-ND4L), found in Felis catus (Cat).